A 217-amino-acid polypeptide reads, in one-letter code: MFARYGRTTLTKTLLLCLAAFFCALLLPTLVQIPVMTLSLLMVLFSLYFFRDPSRTPVGNASAIVAPADGKVLLIRKTDHPFTGKNSTLVSIFMSPFNVHVNRIPINGRVTHLEYHPGKFLMAFDHNSMSDNERMDIGIENTQSKVFFSQVSGFLARRIVCHLTNDQNVRAGEKFGMIKFGSRLDIILPSQAEIALEEGKKTRAGETVVARLPNITT.

The active-site Schiff-base intermediate with substrate; via pyruvic acid is the S182. The residue at position 182 (S182) is a Pyruvic acid (Ser); by autocatalysis.

It belongs to the phosphatidylserine decarboxylase family. PSD-A subfamily. In terms of assembly, heterodimer of a large membrane-associated beta subunit and a small pyruvoyl-containing alpha subunit. Requires pyruvate as cofactor. In terms of processing, is synthesized initially as an inactive proenzyme. Formation of the active enzyme involves a self-maturation process in which the active site pyruvoyl group is generated from an internal serine residue via an autocatalytic post-translational modification. Two non-identical subunits are generated from the proenzyme in this reaction, and the pyruvate is formed at the N-terminus of the alpha chain, which is derived from the carboxyl end of the proenzyme. The post-translation cleavage follows an unusual pathway, termed non-hydrolytic serinolysis, in which the side chain hydroxyl group of the serine supplies its oxygen atom to form the C-terminus of the beta chain, while the remainder of the serine residue undergoes an oxidative deamination to produce ammonia and the pyruvoyl prosthetic group on the alpha chain.

It localises to the cell membrane. It catalyses the reaction a 1,2-diacyl-sn-glycero-3-phospho-L-serine + H(+) = a 1,2-diacyl-sn-glycero-3-phosphoethanolamine + CO2. Its pathway is phospholipid metabolism; phosphatidylethanolamine biosynthesis; phosphatidylethanolamine from CDP-diacylglycerol: step 2/2. In terms of biological role, catalyzes the formation of phosphatidylethanolamine (PtdEtn) from phosphatidylserine (PtdSer). The polypeptide is Phosphatidylserine decarboxylase proenzyme (Prosthecochloris aestuarii (strain DSM 271 / SK 413)).